Reading from the N-terminus, the 500-residue chain is L-arabinose isomerase (500 aa).

Positions 306, 333, 350, and 450 each coordinate Mn(2+).

It belongs to the arabinose isomerase family. In terms of assembly, homohexamer. The cofactor is Mn(2+).

The enzyme catalyses beta-L-arabinopyranose = L-ribulose. It functions in the pathway carbohydrate degradation; L-arabinose degradation via L-ribulose; D-xylulose 5-phosphate from L-arabinose (bacterial route): step 1/3. Catalyzes the conversion of L-arabinose to L-ribulose. This chain is L-arabinose isomerase, found in Salmonella paratyphi A (strain ATCC 9150 / SARB42).